Here is a 1503-residue protein sequence, read N- to C-terminus: ATP-binding cassette sub-family C member 6 (1503 aa).

The Extracellular segment spans residues 1–31 (MAAPAEPCAGQGVWNQTEPEPAATSLLSLCF). A glycan (N-linked (GlcNAc...) asparagine) is linked at Asn15. Residues 32-52 (LRTAGVWVPPMYLWVLGPIYL) traverse the membrane as a helical segment. Residues 53–72 (LFIHHHGRGYLRMSPLFKAK) are Cytoplasmic-facing. Residues 73–93 (MVLGFALIVLCTSSVAVALWK) traverse the membrane as a helical segment. Residues 94–98 (IQQGT) are Extracellular-facing. The helical transmembrane segment at 99–119 (PEAPEFLIHPTVWLTTMSFAV) threads the bilayer. Residues 120–131 (FLIHTERKKGVQ) are Cytoplasmic-facing. The helical transmembrane segment at 132–149 (SSGVLFGYWLLCFVLPAT) threads the bilayer. Over 150–167 (NAAQQASGAGFQSDPVRH) the chain is Extracellular. Residues 168–188 (LSTYLCLSLVVAQFVLSCLAD) form a helical membrane-spanning segment. The Cytoplasmic portion of the chain corresponds to 189-302 (QPPFFPEDPQ…GSQWRPLLKA (114 aa)). The helical transmembrane segment at 303–323 (IWQVFHSTFLLGTLSLIISDV) threads the bilayer. Residues 311-593 (FLLGTLSLII…LPFSIHSLVQ (283 aa)) form the ABC transmembrane type-1 1 domain. The Extracellular portion of the chain corresponds to 324-349 (FRFTVPKLLSLFLEFIGDPKPPAWKG). Residues 350 to 370 (YLLAVLMFLSACLQTLFEQQN) traverse the membrane as a helical segment. Residues 371–426 (MYRLKVLQMRLRSAITGLVYRKVLALSSGSRKASAVGDVVNLVSVDVQRLTESVLY) lie on the Cytoplasmic side of the membrane. The chain crosses the membrane as a helical span at residues 427–447 (LNGLWLPLVWIVVCFVYLWQL). The Extracellular segment spans residues 448-450 (LGP). Residues 451–471 (SALTAIAVFLSLLPLNFFISK) form a helical membrane-spanning segment. Over 472–533 (KRNHHQEEQM…ALRTSGLLFS (62 aa)) the chain is Cytoplasmic. The chain crosses the membrane as a helical span at residues 534–554 (VSLVSFQVSTFLVALVVFAVH). Topologically, residues 555–575 (TLVAENAMNAEKAFVTLTVLN) are extracellular. The helical transmembrane segment at 576–596 (ILNKAQAFLPFSIHSLVQARV) threads the bilayer. Residues 597–939 (SFDRLVTFLC…VKATVHLAYL (343 aa)) lie on the Cytoplasmic side of the membrane. The ABC transporter 1 domain maps to 629–853 (ITIHSATFAW…KGALMCLLDQ (225 aa)). Position 663-670 (663-670 (GPVGAGKS)) interacts with ATP. The segment at 854 to 919 (ARQPGDRGEG…LDDPDRAGWP (66 aa)) is disordered. Over residues 881 to 901 (RRPELRRERSIKSVPEKDRTT) the composition is skewed to basic and acidic residues. A helical transmembrane segment spans residues 940-960 (RAVGTPLCLYALFLFLCQQVA). Residues 947–1228 (CLYALFLFLC…VVRNWTDLEN (282 aa)) enclose the ABC transmembrane type-1 2 domain. Residues 961–997 (SFCRGYWLSLWADDPAVGGQQTQAALRGGIFGLLGCL) are Extracellular-facing. A helical transmembrane segment spans residues 998-1018 (QAIGLFASMAAVLLGGARASR). Topologically, residues 1019–1061 (LLFQRLLWDVVRSPISFFERTPIGHLLNRFSKETDTVDVDIPD) are cytoplasmic. A helical transmembrane segment spans residues 1062–1082 (KLRSLLMYAFGLLEVSLVVAV). A topological domain (extracellular) is located at residue Ala1083. The chain crosses the membrane as a helical span at residues 1084–1104 (TPLATVAILPLFLLYAGFQSL). Topologically, residues 1105 to 1175 (YVVSSCQLRR…VADRWLAANV (71 aa)) are cytoplasmic. The chain crosses the membrane as a helical span at residues 1176-1196 (ELLGNGLVFAAATCAVLSKAH). Topologically, residues 1197–1198 (LS) are extracellular. Residues 1199–1219 (AGLVGFSVSAALQVTQTLQWV) traverse the membrane as a helical segment. Residues 1220-1503 (VRNWTDLENS…YRLAQESGLV (284 aa)) lie on the Cytoplasmic side of the membrane. An ABC transporter 2 domain is found at 1265–1499 (IEFRDFGLRY…KGLFYRLAQE (235 aa)). Position 1286 is a phosphoserine (Ser1286). 1299 to 1306 (GRTGAGKS) provides a ligand contact to ATP.

It belongs to the ABC transporter superfamily. ABCC family. Conjugate transporter (TC 3.A.1.208) subfamily. It depends on Mg(2+) as a cofactor. Glycosylated. Expressed in kidney and liver. Very low expression in other tissues. In testis, localized to peritubular myoid cells, Leydig cells, along the basal membrane of Sertoli cells and moderately in the adluminal compartment of the seminiferous tubules.

The protein localises to the basal cell membrane. It localises to the basolateral cell membrane. The protein resides in the endoplasmic reticulum membrane. It catalyses the reaction an S-substituted glutathione(in) + ATP + H2O = an S-substituted glutathione(out) + ADP + phosphate + H(+). The enzyme catalyses leukotriene C4(in) + ATP + H2O = leukotriene C4(out) + ADP + phosphate + H(+). Its activity is regulated as follows. LTC4 transport is completely inhibited by 1 mM orthovanadate. In terms of biological role, ATP-dependent transporter of the ATP-binding cassette (ABC) family that actively extrudes physiological compounds, and xenobiotics from cells. Mediates ATP-dependent transport of glutathione conjugates such as leukotriene-c4 (LTC4) and N-ethylmaleimide S-glutathione (NEM-GS) (in vitro), and an anionic cyclopentapeptide endothelin antagonist, BQ-123. May contribute to regulate the transport of organic compounds in testes across the blood-testis-barrier. Does not appear to actively transport drugs outside the cell. Confers low levels of cellular resistance to etoposide, teniposide, anthracyclines and cisplatin. Its function is as follows. Mediates the release of nucleoside triphosphates, predominantly ATP, into the circulation, where it is rapidly converted into AMP and the mineralization inhibitor inorganic pyrophosphate (PPi) by the ecto-enzyme ectonucleotide pyrophosphatase phosphodiesterase 1 (ENPP1), therefore playing a role in PPi homeostasis. Inhibits TNF-alpha-mediated apoptosis through blocking one or more caspases. This chain is ATP-binding cassette sub-family C member 6 (ABCC6), found in Homo sapiens (Human).